The primary structure comprises 259 residues: GTP cyclohydrolase FolE2 (259 aa).

The protein belongs to the GTP cyclohydrolase IV family.

The catalysed reaction is GTP + H2O = 7,8-dihydroneopterin 3'-triphosphate + formate + H(+). Its pathway is cofactor biosynthesis; 7,8-dihydroneopterin triphosphate biosynthesis; 7,8-dihydroneopterin triphosphate from GTP: step 1/1. Converts GTP to 7,8-dihydroneopterin triphosphate. The chain is GTP cyclohydrolase FolE2 from Thermosipho melanesiensis (strain DSM 12029 / CIP 104789 / BI429).